The following is a 162-amino-acid chain: Glutathione peroxidase-like peroxiredoxin GPX5 (162 aa).

Cys-38 is modified (S-selanylcysteine). The active site involves Asn-87.

This sequence belongs to the glutathione peroxidase family. Post-translationally, cys-87 is S-selanylated when selenium levels are high. S-selanylation may increase or be important for glutathione peroxidase activity.

It is found in the cytoplasm. It carries out the reaction 2 glutathione + H2O2 = glutathione disulfide + 2 H2O. It catalyses the reaction a hydroperoxide + [thioredoxin]-dithiol = an alcohol + [thioredoxin]-disulfide + H2O. In terms of biological role, has thioredoxin peroxidase activity. May also have glutathione peroxidase activity, although this activity is controversial. Protects cells against reactive oxygen species, which may include photooxidative stress, hydrogen peroxide and organic hydroperoxides. The polypeptide is Glutathione peroxidase-like peroxiredoxin GPX5 (Chlamydomonas reinhardtii (Chlamydomonas smithii)).